A 95-amino-acid chain; its full sequence is Integration host factor subunit beta (95 aa).

Belongs to the bacterial histone-like protein family. In terms of assembly, heterodimer of an alpha and a beta chain.

Functionally, this protein is one of the two subunits of integration host factor, a specific DNA-binding protein that functions in genetic recombination as well as in transcriptional and translational control. The chain is Integration host factor subunit beta from Shewanella putrefaciens (strain CN-32 / ATCC BAA-453).